The primary structure comprises 287 residues: Small ribosomal subunit protein uS3 (287 aa).

Residues 38 to 106 enclose the KH type-2 domain; that stretch reads IRRLLATGLE…QVQLNILEVK (69 aa). Residues 216-287 form a disordered region; the sequence is AAAPAGADRP…AETTTQNPGS (72 aa). Low complexity predominate over residues 238–287; sequence SGASGTTATSTDAGRAASGTQEAPAAAEAAAGTEAAAGAAAETTTQNPGS.

Belongs to the universal ribosomal protein uS3 family. In terms of assembly, part of the 30S ribosomal subunit. Forms a tight complex with proteins S10 and S14.

Functionally, binds the lower part of the 30S subunit head. Binds mRNA in the 70S ribosome, positioning it for translation. This is Small ribosomal subunit protein uS3 from Mycobacterium sp. (strain JLS).